Reading from the N-terminus, the 729-residue chain is Fatty acid oxidation complex subunit alpha (729 aa).

The enoyl-CoA hydratase/isomerase stretch occupies residues Met1 to Lys189. Substrate is bound at residue Asp296. Residues Glu311–Ala729 form a 3-hydroxyacyl-CoA dehydrogenase region. NAD(+)-binding positions include Met324, Asp343, Val400–Glu402, Lys407, and Ser429. Catalysis depends on His450, which acts as the For 3-hydroxyacyl-CoA dehydrogenase activity. Asn453 provides a ligand contact to NAD(+). Residues Asn500 and Tyr660 each coordinate substrate. The segment at Arg708 to Ala729 is disordered.

This sequence in the N-terminal section; belongs to the enoyl-CoA hydratase/isomerase family. It in the C-terminal section; belongs to the 3-hydroxyacyl-CoA dehydrogenase family. In terms of assembly, heterotetramer of two alpha chains (FadB) and two beta chains (FadA).

It carries out the reaction a (3S)-3-hydroxyacyl-CoA + NAD(+) = a 3-oxoacyl-CoA + NADH + H(+). The enzyme catalyses a (3S)-3-hydroxyacyl-CoA = a (2E)-enoyl-CoA + H2O. It catalyses the reaction a 4-saturated-(3S)-3-hydroxyacyl-CoA = a (3E)-enoyl-CoA + H2O. The catalysed reaction is (3S)-3-hydroxybutanoyl-CoA = (3R)-3-hydroxybutanoyl-CoA. It carries out the reaction a (3Z)-enoyl-CoA = a 4-saturated (2E)-enoyl-CoA. The enzyme catalyses a (3E)-enoyl-CoA = a 4-saturated (2E)-enoyl-CoA. Its pathway is lipid metabolism; fatty acid beta-oxidation. In terms of biological role, involved in the aerobic and anaerobic degradation of long-chain fatty acids via beta-oxidation cycle. Catalyzes the formation of 3-oxoacyl-CoA from enoyl-CoA via L-3-hydroxyacyl-CoA. It can also use D-3-hydroxyacyl-CoA and cis-3-enoyl-CoA as substrate. In Escherichia coli (strain SMS-3-5 / SECEC), this protein is Fatty acid oxidation complex subunit alpha.